The following is a 274-amino-acid chain: Imidazole glycerol phosphate synthase subunit HisF (274 aa).

Residues Asp-11 and Asp-134 contribute to the active site.

The protein belongs to the HisA/HisF family. As to quaternary structure, heterodimer of HisH and HisF.

The protein localises to the cytoplasm. The catalysed reaction is 5-[(5-phospho-1-deoxy-D-ribulos-1-ylimino)methylamino]-1-(5-phospho-beta-D-ribosyl)imidazole-4-carboxamide + L-glutamine = D-erythro-1-(imidazol-4-yl)glycerol 3-phosphate + 5-amino-1-(5-phospho-beta-D-ribosyl)imidazole-4-carboxamide + L-glutamate + H(+). The protein operates within amino-acid biosynthesis; L-histidine biosynthesis; L-histidine from 5-phospho-alpha-D-ribose 1-diphosphate: step 5/9. Functionally, IGPS catalyzes the conversion of PRFAR and glutamine to IGP, AICAR and glutamate. The HisF subunit catalyzes the cyclization activity that produces IGP and AICAR from PRFAR using the ammonia provided by the HisH subunit. This is Imidazole glycerol phosphate synthase subunit HisF from Methanobrevibacter smithii (strain ATCC 35061 / DSM 861 / OCM 144 / PS).